A 326-amino-acid chain; its full sequence is Tetraacyldisaccharide 4'-kinase (326 aa).

54-61 provides a ligand contact to ATP; that stretch reads SVGGTGKT.

This sequence belongs to the LpxK family.

The catalysed reaction is a lipid A disaccharide + ATP = a lipid IVA + ADP + H(+). Its pathway is glycolipid biosynthesis; lipid IV(A) biosynthesis; lipid IV(A) from (3R)-3-hydroxytetradecanoyl-[acyl-carrier-protein] and UDP-N-acetyl-alpha-D-glucosamine: step 6/6. Functionally, transfers the gamma-phosphate of ATP to the 4'-position of a tetraacyldisaccharide 1-phosphate intermediate (termed DS-1-P) to form tetraacyldisaccharide 1,4'-bis-phosphate (lipid IVA). The chain is Tetraacyldisaccharide 4'-kinase from Rickettsia canadensis (strain McKiel).